Consider the following 610-residue polypeptide: Isocitrate dehydrogenase kinase/phosphatase (610 aa).

ATP is bound by residues 359–365 (APGFKGT) and Lys-380. Asp-419 is an active-site residue.

Belongs to the AceK family.

The protein localises to the cytoplasm. It catalyses the reaction L-seryl-[isocitrate dehydrogenase] + ATP = O-phospho-L-seryl-[isocitrate dehydrogenase] + ADP + H(+). Functionally, bifunctional enzyme which can phosphorylate or dephosphorylate isocitrate dehydrogenase (IDH) on a specific serine residue. This is a regulatory mechanism which enables bacteria to bypass the Krebs cycle via the glyoxylate shunt in response to the source of carbon. When bacteria are grown on glucose, IDH is fully active and unphosphorylated, but when grown on acetate or ethanol, the activity of IDH declines drastically concomitant with its phosphorylation. This is Isocitrate dehydrogenase kinase/phosphatase from Rhodopseudomonas palustris (strain ATCC BAA-98 / CGA009).